A 330-amino-acid chain; its full sequence is Stomatin-1 (330 aa).

A compositionally biased stretch (polar residues) spans 1–19 (MQPSETVEMQEMAQPSGQQ). Residues 1–27 (MQPSETVEMQEMAQPSGQQRDVEARVQ) are disordered. The chain crosses the membrane as a helical span at residues 42 to 62 (MFCIAMSYVLIFLTFPVSVFM).

It belongs to the band 7/mec-2 family.

Its subcellular location is the membrane. In Caenorhabditis elegans, this protein is Stomatin-1 (sto-1).